Here is a 73-residue protein sequence, read N- to C-terminus: Excelsatoxin A (73 aa).

An N-terminal signal peptide occupies residues 1-20; it reads MRFALVAAITIALLVAGSVA. Residues 21–37 constitute a propeptide that is removed on maturation; sequence DESSEDIDNIVIKTPLD. 3 disulfide bridges follow: C41-C58, C46-C60, and C54-C69.

The protein belongs to the gympietide family. As to expression, expressed in trichomes, that are stiff epidermal hairs located on the surface of petioles and leaves. Not expressed in other aerial parts.

The protein resides in the secreted. In terms of biological role, neurotoxin certainly responsible for the defensive, persistent, and painful stings of the giant stinging tree. Inhibits inactivation of Nav1.7/SCN9A sodium channel in sensory neurons by directly interacting with TMEM233, a newly described Nav-interacting protein. Has virtually no effect on Nav1.7/SCN9A function in heterologous expression systems and in neurons that do not express TMEM233. Also weakly but significantly affects Nav1.8/SCN10A. Coexpression of TMEM233 with Nav also confers ExTxA sensitivity to Nav1.1-Nav1.6. On the Nav1.7/SCN9A channel, causes a significant hyperpolarizing shift in the voltage dependence of activation. Its effects on Nav currents are irreversible, with no apparent reduction in activity even after repeated wash steps over 30 minutes. Does not show activity on Nav1.9/SCN11A. Does not show insecticidal activities. In vivo, induces nocifensive behavior in mice (licking or biting and shaking or lifting of the affected paw) lasting for approximately 1 hour. This chain is Excelsatoxin A, found in Dendrocnide excelsa (Giant stinging tree).